The chain runs to 185 residues: ATP synthase subunit b 2 (185 aa).

The interval 1–26 (MAQGHGDAKGTTAHTEAGGGHKAPFP) is disordered. Residues 37–57 (LVSLAIAFVALYLIVSKIALP) traverse the membrane as a helical segment.

It belongs to the ATPase B chain family. In terms of assembly, F-type ATPases have 2 components, F(1) - the catalytic core - and F(0) - the membrane proton channel. F(1) has five subunits: alpha(3), beta(3), gamma(1), delta(1), epsilon(1). F(0) has three main subunits: a(1), b(2) and c(10-14). The alpha and beta chains form an alternating ring which encloses part of the gamma chain. F(1) is attached to F(0) by a central stalk formed by the gamma and epsilon chains, while a peripheral stalk is formed by the delta and b chains.

The protein localises to the cell inner membrane. Functionally, f(1)F(0) ATP synthase produces ATP from ADP in the presence of a proton or sodium gradient. F-type ATPases consist of two structural domains, F(1) containing the extramembraneous catalytic core and F(0) containing the membrane proton channel, linked together by a central stalk and a peripheral stalk. During catalysis, ATP synthesis in the catalytic domain of F(1) is coupled via a rotary mechanism of the central stalk subunits to proton translocation. Its function is as follows. Component of the F(0) channel, it forms part of the peripheral stalk, linking F(1) to F(0). The b'-subunit is a diverged and duplicated form of b found in plants and photosynthetic bacteria. This is ATP synthase subunit b 2 (atpF2) from Rhodopseudomonas palustris (strain ATCC BAA-98 / CGA009).